The chain runs to 338 residues: Ornithine carbamoyltransferase (338 aa).

Carbamoyl phosphate-binding positions include 56–59 (STRT), R107, and 134–137 (HPTQ). L-ornithine-binding positions include N168, D232, and 236–237 (SM). Carbamoyl phosphate contacts are provided by residues 274–275 (CL) and R320.

This sequence belongs to the aspartate/ornithine carbamoyltransferase superfamily. OTCase family.

It is found in the cytoplasm. It carries out the reaction carbamoyl phosphate + L-ornithine = L-citrulline + phosphate + H(+). The protein operates within amino-acid biosynthesis; L-arginine biosynthesis; L-arginine from L-ornithine and carbamoyl phosphate: step 1/3. In terms of biological role, reversibly catalyzes the transfer of the carbamoyl group from carbamoyl phosphate (CP) to the N(epsilon) atom of ornithine (ORN) to produce L-citrulline. The chain is Ornithine carbamoyltransferase (argI) from Buchnera aphidicola subsp. Schizaphis graminum (strain Sg).